The sequence spans 216 residues: MIITIDGPSGTGKSTLAKALAQTLQFLYCNTGAMYRTLAYARLQPDWQEVPLEDFLASPPFSFSFSKDSPLQAFYGDHLLTSELSSQEVANFASLFSKEPLVRAYMQTLQKQYATVGNCVFEGRDMGSKVFPHAEVKIFLTAKPEIRAERRLKDLPQGSLSKEALMAELIARDQADQQRECDPLVIPQDATVIDSSDLTISQILEKILPLIPSHLT.

ATP is bound at residue 7–15 (GPSGTGKST).

Belongs to the cytidylate kinase family. Type 1 subfamily.

Its subcellular location is the cytoplasm. The enzyme catalyses CMP + ATP = CDP + ADP. The catalysed reaction is dCMP + ATP = dCDP + ADP. This is Cytidylate kinase from Chlamydia trachomatis serovar A (strain ATCC VR-571B / DSM 19440 / HAR-13).